We begin with the raw amino-acid sequence, 220 residues long: CRIB domain-containing protein RIC3 (220 aa).

The region spanning 28–41 (IGFPTDVKHVAHIG) is the CRIB domain. The segment at 39 to 220 (HIGSDGPATN…CNDNNISDKE (182 aa)) is disordered. Polar residues predominate over residues 61 to 77 (NENGQVVSRADANNNQI). Residues 108 to 121 (NGSPPRRNSSASAS) show a composition bias toward low complexity. Composition is skewed to basic residues over residues 127–136 (NTRRHHRSRH) and 172–184 (HSRK…RKPK). The segment covering 209 to 220 (DTCNDNNISDKE) has biased composition (polar residues).

In terms of assembly, interacts with ARAC11/ROP1. As to expression, expressed in flowers and pollen.

It localises to the cytoplasm. Its function is as follows. Functions as a downstream effector of Rho-related GTP binding proteins of the 'Rho of Plants' (ROPs) family. Participates in the propagation of ROP GTPase signals in specific cellular responses. Functions as a downstream effector of ARAC11/ROP1 to activate calcium signaling that leads to F-actin disassembly associated with exocytosis in the tip of the growing pollen tube. Counteracts the ARAC11/ROP1-RIC4 pathway, which promotes apical F-actin assembly associated with vesicle accumulation, to control actin dynamics and pollen tube apical growth. The protein is CRIB domain-containing protein RIC3 (RIC3) of Arabidopsis thaliana (Mouse-ear cress).